Here is a 385-residue protein sequence, read N- to C-terminus: ATP phosphoribosyltransferase regulatory subunit (385 aa).

This sequence belongs to the class-II aminoacyl-tRNA synthetase family. HisZ subfamily. In terms of assembly, heteromultimer composed of HisG and HisZ subunits.

Its subcellular location is the cytoplasm. Its pathway is amino-acid biosynthesis; L-histidine biosynthesis; L-histidine from 5-phospho-alpha-D-ribose 1-diphosphate: step 1/9. Functionally, required for the first step of histidine biosynthesis. May allow the feedback regulation of ATP phosphoribosyltransferase activity by histidine. In Bordetella avium (strain 197N), this protein is ATP phosphoribosyltransferase regulatory subunit.